We begin with the raw amino-acid sequence, 461 residues long: GTPase Der (461 aa).

EngA-type G domains follow at residues 2–164 and 197–369; these read QSII…NENF and IKVG…ANFT. GTP contacts are provided by residues 8 to 15, 55 to 59, 116 to 119, 203 to 210, 250 to 254, and 314 to 317; these read GKPNVGKS, DSGGL, NKID, GRVNVGKS, DTAGI, and NKWD. The region spanning 370 to 454 is the KH-like domain; that stretch reads QKIPTAKLNA…PLIIVSRKKG (85 aa).

Belongs to the TRAFAC class TrmE-Era-EngA-EngB-Septin-like GTPase superfamily. EngA (Der) GTPase family. Associates with the 50S ribosomal subunit.

Functionally, GTPase that plays an essential role in the late steps of ribosome biogenesis. In Campylobacter lari (strain RM2100 / D67 / ATCC BAA-1060), this protein is GTPase Der.